The primary structure comprises 843 residues: Glycogen phosphorylase, muscle form (843 aa).

An N-acetylserine modification is found at S2. Position 15 is a phosphoserine; by PHK; in form phosphorylase A (S15). AMP contacts are provided by D43 and Y76. Residues Y204 and Y227 each carry the phosphotyrosine modification. R310–C319 provides a ligand contact to AMP. A Phosphoserine modification is found at S430. Y473 carries the phosphotyrosine modification. Position 514 is a phosphoserine (S514). K681 carries the N6-(pyridoxal phosphate)lysine modification. Residues S747 and S748 each carry the phosphoserine modification.

This sequence belongs to the glycogen phosphorylase family. As to quaternary structure, homodimer. Homotetramer; to form the enzymatically active phosphorylase A. Pyridoxal 5'-phosphate serves as cofactor. Phosphorylation of Ser-15 converts phosphorylase B (unphosphorylated) to phosphorylase A.

It carries out the reaction [(1-&gt;4)-alpha-D-glucosyl](n) + phosphate = [(1-&gt;4)-alpha-D-glucosyl](n-1) + alpha-D-glucose 1-phosphate. Allosterically regulated through the non-covalent binding of metabolites, being activated by AMP and inhibited by ATP, ADP, and glucose-6-phosphate. The activity is also controlled by post-translational modifications including phosphorylation. In terms of biological role, allosteric enzyme that catalyzes the rate-limiting step in glycogen catabolism, the phosphorolytic cleavage of glycogen to produce glucose-1-phosphate, and plays a central role in maintaining cellular and organismal glucose homeostasis. This is Glycogen phosphorylase, muscle form from Oryctolagus cuniculus (Rabbit).